Here is a 511-residue protein sequence, read N- to C-terminus: Sodium/proline symporter (511 aa).

13 consecutive transmembrane segments (helical) span residues 16 to 36 (WQTY…GFYG), 54 to 74 (IGPY…WMIM), 85 to 105 (LSAI…YFVV), 139 to 159 (IISG…GFVS), 175 to 195 (GLLI…YLAV), 199 to 219 (DFFQ…VALL), 246 to 266 (VLGI…PHII), 284 to 304 (LGIS…LTGI), 327 to 347 (ILFH…AIMS), 381 to 401 (FVLI…TIAW), 407 to 427 (ILNL…PLVL), 438 to 458 (AGAI…ISWI), and 467 to 487 (FFGM…TYIV).

This sequence belongs to the sodium:solute symporter (SSF) (TC 2.A.21) family.

It localises to the cell membrane. The catalysed reaction is L-proline(in) + Na(+)(in) = L-proline(out) + Na(+)(out). In terms of biological role, catalyzes the sodium-dependent uptake of extracellular L-proline. This Staphylococcus epidermidis (strain ATCC 12228 / FDA PCI 1200) protein is Sodium/proline symporter (putP).